The sequence spans 276 residues: Bis(5'-nucleosyl)-tetraphosphatase, symmetrical (276 aa).

Belongs to the Ap4A hydrolase family.

The catalysed reaction is P(1),P(4)-bis(5'-adenosyl) tetraphosphate + H2O = 2 ADP + 2 H(+). Functionally, hydrolyzes diadenosine 5',5'''-P1,P4-tetraphosphate to yield ADP. The polypeptide is Bis(5'-nucleosyl)-tetraphosphatase, symmetrical (Mannheimia succiniciproducens (strain KCTC 0769BP / MBEL55E)).